Consider the following 118-residue polypeptide: Small ribosomal subunit protein uS19c (118 aa).

The disordered stretch occupies residues lysine 92 to lysine 118.

It belongs to the universal ribosomal protein uS19 family.

It localises to the plastid. In terms of biological role, protein S19 forms a complex with S13 that binds strongly to the 16S ribosomal RNA. The sequence is that of Small ribosomal subunit protein uS19c (rps19) from Euglena longa (Euglenophycean alga).